Consider the following 132-residue polypeptide: Large ribosomal subunit protein bL17 (132 aa).

This sequence belongs to the bacterial ribosomal protein bL17 family. As to quaternary structure, part of the 50S ribosomal subunit. Contacts protein L32.

This Ehrlichia canis (strain Jake) protein is Large ribosomal subunit protein bL17.